Consider the following 400-residue polypeptide: 3-phenylpropionate/cinnamic acid dioxygenase ferredoxin--NAD(+) reductase component (400 aa).

An FAD-binding site is contributed by 5 to 36; the sequence is TIIIVGGGQAAAMAAASLRQQGFTGELHLFSD. NAD(+) is bound at residue 146-174; that stretch reads SVVIVGAGTIGLELAASATQRGCKVTVIE.

The protein belongs to the bacterial ring-hydroxylating dioxygenase ferredoxin reductase family. This dioxygenase system consists of four proteins: the two subunits of the hydroxylase component (HcaE and HcaF), a ferredoxin (HcaC) and a ferredoxin reductase (HcaD). The cofactor is FAD.

It carries out the reaction 2 reduced [2Fe-2S]-[ferredoxin] + NAD(+) + H(+) = 2 oxidized [2Fe-2S]-[ferredoxin] + NADH. The protein operates within aromatic compound metabolism; 3-phenylpropanoate degradation. Part of the multicomponent 3-phenylpropionate dioxygenase, that converts 3-phenylpropionic acid (PP) and cinnamic acid (CI) into 3-phenylpropionate-dihydrodiol (PP-dihydrodiol) and cinnamic acid-dihydrodiol (CI-dihydrodiol), respectively. In Escherichia coli (strain SMS-3-5 / SECEC), this protein is 3-phenylpropionate/cinnamic acid dioxygenase ferredoxin--NAD(+) reductase component.